A 329-amino-acid chain; its full sequence is Protoheme IX farnesyltransferase (329 aa).

7 helical membrane-spanning segments follow: residues 61–81 (LACT…LNCL), 108–128 (AFLI…AGVN), 130–150 (LAAG…TIVL), 158–178 (IVIG…AATG), 186–206 (WLFG…ALLL), 243–263 (LLGV…VLPF), and 284–304 (AKGL…LLLL).

The protein belongs to the UbiA prenyltransferase family. Protoheme IX farnesyltransferase subfamily.

Its subcellular location is the cell inner membrane. It carries out the reaction heme b + (2E,6E)-farnesyl diphosphate + H2O = Fe(II)-heme o + diphosphate. Its pathway is porphyrin-containing compound metabolism; heme O biosynthesis; heme O from protoheme: step 1/1. Functionally, converts heme B (protoheme IX) to heme O by substitution of the vinyl group on carbon 2 of heme B porphyrin ring with a hydroxyethyl farnesyl side group. The protein is Protoheme IX farnesyltransferase of Synechococcus sp. (strain RCC307).